The primary structure comprises 441 residues: Adenylyltransferase and sulfurtransferase MOCS3 (441 aa).

Residues Gly83, Asp104, Thr111–Arg115, Lys128, and Asp172–Asn173 contribute to the ATP site. Cys213 and Cys216 together coordinate Zn(2+). The active-site Glycyl thioester intermediate; for adenylyltransferase activity is the Cys230. The Zn(2+) site is built by Cys288 and Cys291. Positions Ala339–Pro439 constitute a Rhodanese domain. Cys395 acts as the Cysteine persulfide intermediate; for sulfurtransferase activity in catalysis.

It in the N-terminal section; belongs to the HesA/MoeB/ThiF family. UBA4 subfamily. It depends on Zn(2+) as a cofactor.

It is found in the cytoplasm. The enzyme catalyses [molybdopterin-synthase sulfur-carrier protein]-C-terminal Gly-Gly + ATP + H(+) = [molybdopterin-synthase sulfur-carrier protein]-C-terminal Gly-Gly-AMP + diphosphate. The catalysed reaction is [molybdopterin-synthase sulfur-carrier protein]-C-terminal Gly-Gly-AMP + S-sulfanyl-L-cysteinyl-[cysteine desulfurase] + AH2 = [molybdopterin-synthase sulfur-carrier protein]-C-terminal-Gly-aminoethanethioate + L-cysteinyl-[cysteine desulfurase] + A + AMP + 2 H(+). Its pathway is tRNA modification; 5-methoxycarbonylmethyl-2-thiouridine-tRNA biosynthesis. It functions in the pathway cofactor biosynthesis; molybdopterin biosynthesis. Its function is as follows. Plays a central role in 2-thiolation of mcm(5)S(2)U at tRNA wobble positions of cytosolic tRNA(Lys), tRNA(Glu) and tRNA(Gln). Also essential during biosynthesis of the molybdenum cofactor. Acts by mediating the C-terminal thiocarboxylation of sulfur carriers URM1 and MOCS2A. Its N-terminus first activates URM1 and MOCS2A as acyl-adenylates (-COAMP), then the persulfide sulfur on the catalytic cysteine is transferred to URM1 and MOCS2A to form thiocarboxylation (-COSH) of their C-terminus. The reaction probably involves hydrogen sulfide that is generated from the persulfide intermediate and that acts as a nucleophile towards URM1 and MOCS2A. Subsequently, a transient disulfide bond is formed. Does not use thiosulfate as sulfur donor; NFS1 probably acting as a sulfur donor for thiocarboxylation reactions. The sequence is that of Adenylyltransferase and sulfurtransferase MOCS3 from Anopheles gambiae (African malaria mosquito).